Consider the following 239-residue polypeptide: MRYTVITLFPNLVRPWLEESLLKKALERGLIRVEVVDLRAFGLGRHRTVDDTPYGGGAGMVIRPDVAVAALERALPADEVVLLSPAGRPFTQKVAEELAGKEHLVLLAGRYEGFDARVEAFATRILSIGDYVLMGGEVAALAVLEATARLVPGVIGDPQSHREDSFVRGLLDYPQYTRPPEFRGLRVPEVLLSGHHQEVERWRRQEALRRTLALRPELVARAPLSLLEARLLAEMDREE.

Residues Gly-109 and 128-133 (IGDYVL) contribute to the S-adenosyl-L-methionine site.

It belongs to the RNA methyltransferase TrmD family. Homodimer.

It is found in the cytoplasm. It carries out the reaction guanosine(37) in tRNA + S-adenosyl-L-methionine = N(1)-methylguanosine(37) in tRNA + S-adenosyl-L-homocysteine + H(+). Specifically methylates guanosine-37 in various tRNAs. This Thermus thermophilus (strain ATCC 27634 / DSM 579 / HB8) protein is tRNA (guanine-N(1)-)-methyltransferase.